A 123-amino-acid polypeptide reads, in one-letter code: Small ribosomal subunit protein uS12 (123 aa).

The segment at 1–22 (MATINQLVRQPRKRSVEKSDVP) is disordered. D89 carries the post-translational modification 3-methylthioaspartic acid. The interval 100-123 (GSLDTSGVKGRNQGRSKYGTKRPK) is disordered. Over residues 111-123 (NQGRSKYGTKRPK) the composition is skewed to basic residues.

The protein belongs to the universal ribosomal protein uS12 family. As to quaternary structure, part of the 30S ribosomal subunit. Contacts proteins S8 and S17. May interact with IF1 in the 30S initiation complex.

In terms of biological role, with S4 and S5 plays an important role in translational accuracy. Interacts with and stabilizes bases of the 16S rRNA that are involved in tRNA selection in the A site and with the mRNA backbone. Located at the interface of the 30S and 50S subunits, it traverses the body of the 30S subunit contacting proteins on the other side and probably holding the rRNA structure together. The combined cluster of proteins S8, S12 and S17 appears to hold together the shoulder and platform of the 30S subunit. The polypeptide is Small ribosomal subunit protein uS12 (Pseudomonas entomophila (strain L48)).